The primary structure comprises 332 residues: Thiosulfate-binding protein (332 aa).

The N-terminal stretch at 1 to 22 (MKRLFSASLLAAGLALGGAAHA) is a signal peptide.

This sequence belongs to the prokaryotic sulfate-binding protein family.

It is found in the periplasm. Functionally, binds thiosulfate specifically and with high affinity. Has no detectable affinity for sulfate. This chain is Thiosulfate-binding protein, found in Pseudomonas aeruginosa (strain ATCC 15692 / DSM 22644 / CIP 104116 / JCM 14847 / LMG 12228 / 1C / PRS 101 / PAO1).